A 296-amino-acid polypeptide reads, in one-letter code: F-box only protein 2 (296 aa).

The disordered stretch occupies residues 1 to 41 (MDGDGDPESVGQPEEASPEEQPEEASAEEERPEDQQEEEAA). Positions 16-40 (ASPEEQPEEASAEEERPEDQQEEEA) are enriched in acidic residues. One can recognise an F-box domain in the interval 44 to 91 (AAYLDELPEPLLLRVLAALPAAELVQACRLVCLRWKELVDGAPLWLLK). The 184-residue stretch at 113-296 (FYFLSKRRRN…VTNSSVWVEP (184 aa)) folds into the FBA domain. Residues 210 to 212 (RSD) and 278 to 279 (YW) each bind a carbohydrate.

Component of the SCF(FBXO2) complex consisting of CUL1, RBX1, SKP1 and FBXO2. Predominantly detected as heterodimer with SKP1; the heterodimer with SKP1 is not part of the SCF(FBXO2) complex.

It localises to the cytoplasm. It is found in the microsome membrane. It participates in protein modification; protein ubiquitination. Substrate recognition component of a SCF (SKP1-CUL1-F-box protein) E3 ubiquitin-protein ligase complex that mediates the ubiquitination and subsequent proteasomal degradation of target proteins. Involved in the endoplasmic reticulum-associated degradation pathway (ERAD) for misfolded lumenal proteins by recognizing and binding sugar chains on unfolded glycoproteins that are retrotranslocated into the cytosol and promoting their ubiquitination and subsequent degradation. Prevents formation of cytosolic aggregates of unfolded glycoproteins that have been retrotranslocated into the cytosol. Able to recognize and bind denatured glycoproteins, preferentially those of the high-mannose type. The chain is F-box only protein 2 (FBXO2) from Homo sapiens (Human).